A 363-amino-acid polypeptide reads, in one-letter code: Cinnamyl alcohol dehydrogenase 2 (363 aa).

Cys-47 lines the Zn(2+) pocket. Thr-49 is an NADP(+) binding site. 7 residues coordinate Zn(2+): His-69, Glu-70, Cys-100, Cys-103, Cys-106, Cys-114, and Cys-163. Residues Thr-167, 188 to 193, 211 to 216, Thr-251, Gly-275, and 298 to 300 contribute to the NADP(+) site; these read GLGGVG, SSSARK, and SFI.

It belongs to the zinc-containing alcohol dehydrogenase family. Homodimer. Zn(2+) is required as a cofactor. As to expression, expressed in roots behind the root tips in the pericycle region and layer of cortical cells adjacent to the exodermis. Expressed in vascular bundles and lateral veins of leaf sheaths and blades. Expressed in the vicinity of vascular bundles in the first internode below the inflorescence. Highly expressed in the culm.

The catalysed reaction is (E)-cinnamyl alcohol + NADP(+) = (E)-cinnamaldehyde + NADPH + H(+). The enzyme catalyses (E)-coniferol + NADP(+) = (E)-coniferaldehyde + NADPH + H(+). It catalyses the reaction (E)-sinapyl alcohol + NADP(+) = (E)-sinapaldehyde + NADPH + H(+). It carries out the reaction (E)-4-coumaroyl alcohol + NADP(+) = (E)-4-coumaraldehyde + NADPH + H(+). The catalysed reaction is (E)-caffeyl alcohol + NADP(+) = (E)-caffeyl aldehyde + NADPH + H(+). The protein operates within aromatic compound metabolism; phenylpropanoid biosynthesis. Its function is as follows. Involved in lignin biosynthesis. Catalyzes the final step specific for the production of lignin monomers. Catalyzes the NADPH-dependent reduction of coniferaldehyde and sinapaldehyde to their respective alcohols. Plays the major role in monolignol biosynthesis. Functions cooperatively with COMT in the culm internodes for the biosynthesis of monolignols, the lignin precursors. May be involved in lignin biosynthesis in leaves and roots. The chain is Cinnamyl alcohol dehydrogenase 2 from Oryza sativa subsp. japonica (Rice).